The chain runs to 227 residues: Lectin (227 aa).

Positions M1–A28 are cleaved as a signal peptide. Q29 is subject to Pyrrolidone carboxylic acid. 4 Chitin-binding type-1 domains span residues Q29–S70, S71–A113, D114–P156, and E157–K199. 16 disulfide bridges follow: C31–C46, C40–C52, C45–C59, C63–C68, C74–C89, C83–C95, C88–C102, C106–C111, C117–C132, C126–C138, C131–C145, C149–C154, C160–C175, C169–C181, C174–C188, and C192–C197. M38–C40 serves as a coordination point for substrate. S90 to Y101 serves as a coordination point for substrate. A substrate-binding site is contributed by S142–E143. Residues D202 to V227 constitute a propeptide that is removed on maturation. N211 is a glycosylation site (N-linked (GlcNAc...) asparagine).

In terms of biological role, N-acetyl-D-glucosamine binding lectin. This Oryza sativa subsp. indica (Rice) protein is Lectin.